The chain runs to 406 residues: Phosphopentomutase (406 aa).

Residues Asp10, Asp305, His310, Asp346, His347, and His358 each contribute to the Mn(2+) site.

This sequence belongs to the phosphopentomutase family. It depends on Mn(2+) as a cofactor.

Its subcellular location is the cytoplasm. The enzyme catalyses 2-deoxy-alpha-D-ribose 1-phosphate = 2-deoxy-D-ribose 5-phosphate. The catalysed reaction is alpha-D-ribose 1-phosphate = D-ribose 5-phosphate. Its pathway is carbohydrate degradation; 2-deoxy-D-ribose 1-phosphate degradation; D-glyceraldehyde 3-phosphate and acetaldehyde from 2-deoxy-alpha-D-ribose 1-phosphate: step 1/2. In terms of biological role, isomerase that catalyzes the conversion of deoxy-ribose 1-phosphate (dRib-1-P) and ribose 1-phosphate (Rib-1-P) to deoxy-ribose 5-phosphate (dRib-5-P) and ribose 5-phosphate (Rib-5-P), respectively. The polypeptide is Phosphopentomutase (Vibrio campbellii (strain ATCC BAA-1116)).